A 249-amino-acid polypeptide reads, in one-letter code: Putative adhesin RC1281 (249 aa).

A signal peptide spans 1–22; sequence MKKLLLIAAASTALLTSGLSFA.

Functionally, adheres to biotinylated epithelial (Vero cell) proteins. This is Putative adhesin RC1281 from Rickettsia conorii (strain ATCC VR-613 / Malish 7).